Here is a 419-residue protein sequence, read N- to C-terminus: UDP-N-acetylglucosamine 1-carboxyvinyltransferase (419 aa).

A phosphoenolpyruvate-binding site is contributed by 22–23; that stretch reads KN. Arginine 91 contacts UDP-N-acetyl-alpha-D-glucosamine. The active-site Proton donor is cysteine 115. Cysteine 115 bears the 2-(S-cysteinyl)pyruvic acid O-phosphothioketal mark. Residues 120–124, 160–163, aspartate 305, and valine 327 each bind UDP-N-acetyl-alpha-D-glucosamine; these read RPVDL and KVSV.

It belongs to the EPSP synthase family. MurA subfamily.

The protein resides in the cytoplasm. It catalyses the reaction phosphoenolpyruvate + UDP-N-acetyl-alpha-D-glucosamine = UDP-N-acetyl-3-O-(1-carboxyvinyl)-alpha-D-glucosamine + phosphate. It functions in the pathway cell wall biogenesis; peptidoglycan biosynthesis. Its function is as follows. Cell wall formation. Adds enolpyruvyl to UDP-N-acetylglucosamine. The protein is UDP-N-acetylglucosamine 1-carboxyvinyltransferase of Escherichia coli (strain K12 / MC4100 / BW2952).